Here is a 38-residue protein sequence, read N- to C-terminus: Humanin-like protein (38 aa).

In the testis, expressed in Leydig cells at 10, 20 and 60 days of age (at protein level). Also expressed in pachytene spermatocytes at day 20 and in vessels, peritubular cells and spermatids at day 60. Not detected in Sertoli cells (at protein level). In the adult ovary, expressed in stromal cells, granulosa cells, theca cells and oocytes at diestrus and proestrus (at protein level). Expressed in the anterior pituitary where it is detected in lactotropes and somatotropes with lower levels in females than males (at protein level). In the hippocampus, expressed in astrocytes but not in neurons or oligodendrocytes (at protein level). Expressed in muscle, liver and hypothalamus but not in epididymal fat (at protein level). Widely expressed with highest levels in cardiac and skeletal muscle and lowest levels in lung, testis and uterus. In the CNS, levels are relatively high in the cerebellum and cortex and low in the hippocampus. In the hippocampus, lower levels are detected in ovariectomized animals than in controls.

Its subcellular location is the mitochondrion. It localises to the secreted. The protein resides in the cytoplasm. In terms of biological role, plays a role as a neuroprotective factor. Protects against neuronal cell death induced by amyloid-beta peptides. Also protects against excitotoxic cell death. Prevents amyloid-beta peptide-induced spatial learning and memory impairments, protects against amyloid-beta peptide-induced suppression of hippocampal long-term potentiation, and inhibits amyloid-beta peptide-induced activation of STAT3 and inhibition of CASP3. Prevents glutamate-induced dendritic atrophy in hippocampal neurons and also prevents glutamate-induced decrease in SYP puncta number and total puncta area. Protects anterior pituitary cells from TNF-induced apoptosis. Plays a role in ovarian follicle development by acting as a cryoprotective factor for granulosa cells in the antral follicle. Increases androgen production in Leydig cells and promotes Leydig cell survival by preventing apoptosis. The protein is Humanin-like protein of Rattus norvegicus (Rat).